A 1578-amino-acid polypeptide reads, in one-letter code: FERM and PDZ domain-containing protein 1 (1578 aa).

The PDZ domain maps to 57-135 (TVKIDKDTLL…SLSITVVRCT (79 aa)). An FERM domain is found at 181-496 (NVLKLYLENG…GYYRLLVDPV (316 aa)). Disordered stretches follow at residues 555–616 (KEEQ…EEDD), 720–743 (SDSS…QGWT), and 759–831 (PLAF…VKKY). The segment covering 720 to 729 (SDSSESTASR) has biased composition (polar residues). Low complexity predominate over residues 730–742 (QGGAPPAWGQQGW). The segment covering 793 to 811 (AEPSATSLQNKASTSSPEN) has biased composition (polar residues). Basic residues predominate over residues 822-831 (PSRRGGVKKY). The important for interaction with GPSM2 stretch occupies residues 924-931 (EPETMETK). Disordered regions lie at residues 950-1030 (PNNK…LASN), 1070-1194 (KYTE…QGCQ), and 1347-1374 (PQPE…SAGS). Residues 968 to 986 (TPHCSNPGSSGPDTAQARP) are compositionally biased toward polar residues. Residues 1100–1117 (TKEEPQGQLSLERDREVT) show a composition bias toward basic and acidic residues. Over residues 1139 to 1150 (DVSNNVSQTLDI) the composition is skewed to polar residues.

As to quaternary structure, interacts with GPSM1. Interacts with GPSM2 (via TPR repeat region).

Its subcellular location is the cytoplasm. It localises to the cytosol. It is found in the cell membrane. Stabilizes membrane-bound GPSM1, and thereby promotes its interaction with GNAI1. The chain is FERM and PDZ domain-containing protein 1 (FRMPD1) from Homo sapiens (Human).